The sequence spans 1006 residues: Transmembrane channel-like protein 5 (1006 aa).

The segment at 1 to 289 (MSAYYRNNWS…DDPVGSLWGE (289 aa)) is disordered. Residues 1–458 (MSAYYRNNWS…YFNFLRWLLK (458 aa)) are Extracellular-facing. Polar residues-rich tracts occupy residues 20–30 (SGSQNRTQGYL), 50–59 (TRSNPYSVAS), and 76–101 (RSLSNPDYSGTRSNAYSAASRTSPDH). Positions 138-149 (AGSSSSGNYAGS) are enriched in low complexity. Positions 239 to 250 (REPDYSDAENGH) are enriched in basic and acidic residues. Residues 459–479 (FNIFSFILNFSFIIIPQFTVA) form a helical membrane-spanning segment. Residues 480–485 (KKNTLQ) are Cytoplasmic-facing. A helical transmembrane segment spans residues 486-508 (FTGLEFFTGVGYFRDTVMYYGFY). The Extracellular segment spans residues 509–525 (TNSTIQHGNSGASYNMQ). The chain crosses the membrane as a helical span at residues 526–546 (LAYIFTIGACLTTCFFSLLFS). Topologically, residues 547-619 (MAKYFRNNFI…NQLLTRFSAY (73 aa)) are cytoplasmic. The helical transmembrane segment at 620 to 640 (MVAWVVSTGVAIACCAAVYYL) threads the bilayer. Topologically, residues 641–654 (AEYNLEFLKTHSNP) are extracellular. A helical transmembrane segment spans residues 655 to 675 (GAVLLLPFVVSCINLAVPCIY). Topologically, residues 676–698 (SMFRLVERYEMPRHEVYVLLIRN) are cytoplasmic. The chain crosses the membrane as a helical span at residues 699–719 (IFLKISIIGILCYYWLNTVAL). At 720–732 (SGEECWETLIGQD) the chain is on the extracellular side. Residues 733–753 (IYRLLLMDFVFSLVNSFLGEF) form a helical membrane-spanning segment. The Cytoplasmic segment spans residues 754-786 (LRRIIGMQLITSLGLQEFDIARNVLELIYAQTL). The chain crosses the membrane as a helical span at residues 787–807 (VWIGIFFCPLLPFIQMIMLFI). The Extracellular segment spans residues 808–835 (MFYSKNISLMMNFQPPSKAWRASQMMTF). The helical transmembrane segment at 836–856 (FIFLLFFPSFTGVLCTLAITI) threads the bilayer. The Cytoplasmic portion of the chain corresponds to 857–900 (WRLKPSADCGPFRGLPLFIHSIYSWIDTLSTRPGYLWVVWIYRN). The helical transmembrane segment at 901-921 (LIGSVHFFFILTLIVLIITYL) threads the bilayer. The Extracellular portion of the chain corresponds to 922–1006 (YWQITEGRKI…RSVQEGNPRA (85 aa)).

It belongs to the TMC family.

Its subcellular location is the membrane. Functionally, probable component of an ion channel. Molecular function hasn't been characterized yet. In Homo sapiens (Human), this protein is Transmembrane channel-like protein 5.